The sequence spans 1263 residues: Multidrug resistance protein sirA (1263 aa).

The disordered stretch occupies residues 1–21 (MAEPESEKPSSAQGGGLPSSD). A run of 4 helical transmembrane segments spans residues 57–77 (LISAFFAAVSGAMFPLLILFI), 104–124 (IALYIVYLFLGQLVSVFIFTN), 179–199 (KIGLFVSACSCFVASYAIGFV), and 206–226 (FILTSTVVAITGVMIIMSGFM). Residues 57 to 347 (LISAFFAAVS…VGPHLQAMSL (291 aa)) form the ABC transmembrane type-1 1 domain. The N-linked (GlcNAc...) asparagine glycan is linked to N232. The next 2 helical transmembrane spans lie at 284-304 (VMGWMLAIMYGLIFLNYGLAI) and 318-338 (VGAIITVLMCLNIGAFLFGNV). The ABC transporter 1 domain maps to 380–625 (IEFRNVSHVY…EGLYQTFVRR (246 aa)). N-linked (GlcNAc...) asparagine glycosylation occurs at N384. 415–422 (GASGSGKS) contacts ATP. N-linked (GlcNAc...) asparagine glycosylation occurs at N469. Positions 635 to 672 (PPHARITPAVDTPASPQHRLSEKTGSIYGQGESEAADK) are disordered. The next 6 helical transmembrane spans lie at 699–719 (VTGIASAVISGAVWPAHSVFF), 740–760 (FWAAMYVMLAFVQIASQGVQG), 817–839 (VFLGTLFSATATVLGGLILSLAV), 843–865 (LTLVTMGTIPIIIVAGYVRLKLV), 930–950 (LSEAVPLGCMSLGFWYGATLV), and 960–980 (FFIVVTAVIFGASSAGLVFAF). The ABC transmembrane type-1 2 domain occupies 699-986 (VTGIASAVIS…VFAFAPDFGK (288 aa)). The region spanning 1021–1259 (VDVSNVVFYY…RGSYYDSVNL (239 aa)) is the ABC transporter 2 domain. 1056–1063 (GGSGSGKS) is an ATP binding site.

The protein belongs to the ABC transporter superfamily. ABCB family. Multidrug resistance exporter (TC 3.A.1.201) subfamily.

The protein resides in the cell membrane. The catalysed reaction is ATP + H2O + xenobioticSide 1 = ADP + phosphate + xenobioticSide 2.. In terms of biological role, sirodesmin transporter that provides the dual role of sirodesmin export and self-protection. Also provides tolerance to gliotoxin. The protein is Multidrug resistance protein sirA of Leptosphaeria maculans (Blackleg fungus).